A 238-amino-acid chain; its full sequence is Inactive glycoside hydrolase XLP1 (238 aa).

Residues 1 to 19 (MKSFLIAIVIAVLLPVSAA) form the signal peptide. Glu-133 is an active-site residue. Residues Asn-171 and Asn-187 are each glycosylated (N-linked (GlcNAc...) asparagine). Glu-219 is a catalytic residue.

This sequence belongs to the glycosyl hydrolase 12 (cellulase H) family. In terms of assembly, interacts with host apoplastic glucanase inhibitor GIP2.

It localises to the secreted. Its function is as follows. Non-functional secreted XEG1-like protein that binds to host Nicotiana benthamiana apoplastic glucanase inhibitor protein GIP2 more tightly than does XEG1, thus it outcompetes XEG1 for GIP2 binding and frees functional XEG1 to support P.parasitica infection. With XEG1, is required to elevate apoplastic sugar during P.parasitica infection. In Phytophthora nicotianae (strain INRA-310) (Phytophthora parasitica), this protein is Inactive glycoside hydrolase XLP1.